The primary structure comprises 109 residues: Cell division protein ZapA (109 aa).

Residues 21 to 99 (PEQRDALNQA…IEQALLEQGR (79 aa)) adopt a coiled-coil conformation.

This sequence belongs to the ZapA family. Type 1 subfamily. Homodimer. Interacts with FtsZ.

The protein resides in the cytoplasm. Activator of cell division through the inhibition of FtsZ GTPase activity, therefore promoting FtsZ assembly into bundles of protofilaments necessary for the formation of the division Z ring. It is recruited early at mid-cell but it is not essential for cell division. The protein is Cell division protein ZapA of Cronobacter sakazakii (strain ATCC BAA-894) (Enterobacter sakazakii).